The primary structure comprises 270 residues: Proteasome subunit alpha type-1 (270 aa).

Positions 239–270 (SMEAAEEAPAAEAESSSMQEEDKGTDAAPMDI) are disordered. Residues 245-256 (EAPAAEAESSSM) are compositionally biased toward low complexity.

It belongs to the peptidase T1A family. As to quaternary structure, the 26S proteasome consists of a 20S proteasome core and two 19S regulatory subunits. The 20S proteasome core is composed of 28 subunits that are arranged in four stacked rings, resulting in a barrel-shaped structure. The two end rings are each formed by seven alpha subunits, and the two central rings are each formed by seven beta subunits. The catalytic chamber with the active sites is on the inside of the barrel.

It is found in the cytoplasm. The protein localises to the nucleus. In terms of biological role, the proteasome is a multicatalytic proteinase complex which is characterized by its ability to cleave peptides with Arg, Phe, Tyr, Leu, and Glu adjacent to the leaving group at neutral or slightly basic pH. The proteasome has an ATP-dependent proteolytic activity. The protein is Proteasome subunit alpha type-1 (PAF1) of Oryza sativa subsp. japonica (Rice).